A 115-amino-acid polypeptide reads, in one-letter code: Urease subunit beta (115 aa).

The protein belongs to the urease beta subunit family. In terms of assembly, heterotrimer of UreA (gamma), UreB (beta) and UreC (alpha) subunits. Three heterotrimers associate to form the active enzyme.

The protein localises to the cytoplasm. The catalysed reaction is urea + 2 H2O + H(+) = hydrogencarbonate + 2 NH4(+). It functions in the pathway nitrogen metabolism; urea degradation; CO(2) and NH(3) from urea (urease route): step 1/1. The sequence is that of Urease subunit beta from Arthrobacter sp. (strain FB24).